The following is a 355-amino-acid chain: UDP-N-acetylglucosamine--N-acetylmuramyl-(pentapeptide) pyrophosphoryl-undecaprenol N-acetylglucosamine transferase (355 aa).

UDP-N-acetyl-alpha-D-glucosamine is bound by residues 13–15 (TGG), Asn-125, Arg-162, Ser-190, Ile-244, and Gln-289.

It belongs to the glycosyltransferase 28 family. MurG subfamily.

The protein resides in the cell inner membrane. The catalysed reaction is di-trans,octa-cis-undecaprenyl diphospho-N-acetyl-alpha-D-muramoyl-L-alanyl-D-glutamyl-meso-2,6-diaminopimeloyl-D-alanyl-D-alanine + UDP-N-acetyl-alpha-D-glucosamine = di-trans,octa-cis-undecaprenyl diphospho-[N-acetyl-alpha-D-glucosaminyl-(1-&gt;4)]-N-acetyl-alpha-D-muramoyl-L-alanyl-D-glutamyl-meso-2,6-diaminopimeloyl-D-alanyl-D-alanine + UDP + H(+). It participates in cell wall biogenesis; peptidoglycan biosynthesis. Cell wall formation. Catalyzes the transfer of a GlcNAc subunit on undecaprenyl-pyrophosphoryl-MurNAc-pentapeptide (lipid intermediate I) to form undecaprenyl-pyrophosphoryl-MurNAc-(pentapeptide)GlcNAc (lipid intermediate II). This Neisseria meningitidis serogroup B (strain ATCC BAA-335 / MC58) protein is UDP-N-acetylglucosamine--N-acetylmuramyl-(pentapeptide) pyrophosphoryl-undecaprenol N-acetylglucosamine transferase.